We begin with the raw amino-acid sequence, 20 residues long: Thrombin-like enzyme Cdc SII (20 aa).

The protein belongs to the peptidase S1 family. Snake venom subfamily. In terms of assembly, monomer. In terms of tissue distribution, expressed by the venom gland.

It is found in the secreted. Strongly inhibited by PMSF and moderately inhibited by leupeptin. Not inhibited by EDTA, aprotinin, pepstatin, and bestatin. Its function is as follows. Thrombin-like snake venom serine protease that coagulates human plasma and bovine fibrinogen by hydrolysis of the alpha chains (FGA) (minimum coagulation dose is 60 ug on fibrinogen). Has fibrinogenolytic activities, and degrades preferentially the Aalpha chain (FGA). Shows amidolytic activity toward N-benzoyl-L-Arg-p-nitroanilide, has a higher activity than Cdc SI. In vivo, intravenous injection induces defibrin(ogen)ation and a loss of the righting reflex and opisthotoxins, together with a typical gyroxin-like effect (18-20 minutes). Subcutaneous injection into the footpads induces moderate edema. Potentiates local hemorrhagic activity induced by metalloproteinases (BaP1). The sequence is that of Thrombin-like enzyme Cdc SII from Crotalus durissus cumanensis (South American rattlesnake).